Reading from the N-terminus, the 350-residue chain is tRNA uridine(34) hydroxylase (350 aa).

A Rhodanese domain is found at 146–240 (DDPDTLFVDM…YARKAKEQGL (95 aa)). Catalysis depends on Cys200, which acts as the Cysteine persulfide intermediate.

It belongs to the TrhO family.

The catalysed reaction is uridine(34) in tRNA + AH2 + O2 = 5-hydroxyuridine(34) in tRNA + A + H2O. Functionally, catalyzes oxygen-dependent 5-hydroxyuridine (ho5U) modification at position 34 in tRNAs. The sequence is that of tRNA uridine(34) hydroxylase from Yersinia enterocolitica serotype O:8 / biotype 1B (strain NCTC 13174 / 8081).